The following is a 114-amino-acid chain: MEIVNKQSFQEVLEYVRMYRLKNRIKRDMEDNNRKIRDNQKRILLLDNLNQYIRDDMTIAEVRGIIESMRDDYESRVDDYTIRNAELSKQRREASTKMKEQKKAHAELLKNAEK.

Residues 70-111 (RDDYESRVDDYTIRNAELSKQRREASTKMKEQKKAHAELLKN) adopt a coiled-coil conformation. The segment at 89–114 (KQRREASTKMKEQKKAHAELLKNAEK) is disordered.

The protein belongs to the pole-localizer TmaR family.

It is found in the cytoplasm. Its function is as follows. Pole-localizer protein involved in the regulation of several cellular processes. The polypeptide is Pole-localizer protein TmaR (Haemophilus influenzae (strain 86-028NP)).